The following is a 180-amino-acid chain: MTSRLEKFYKEEVVPALMKQFGYTNPMEVPKLVKVTLNMGVGEAATNKKILENAVGDMTKISGQKPVVTKSRISVASFKIRDGWPIGCKTTLRRHKMYEFLDRLINISLPRVRDFRGVSGRSFDGRGNFNMGVKEQIIFPEIDFDAVDAIRGMDIAITTTAKTDAEAKALLAAFKFPFRN.

This sequence belongs to the universal ribosomal protein uL5 family. As to quaternary structure, part of the 50S ribosomal subunit; part of the 5S rRNA/L5/L18/L25 subcomplex. Contacts the 5S rRNA and the P site tRNA. Forms a bridge to the 30S subunit in the 70S ribosome.

This is one of the proteins that bind and probably mediate the attachment of the 5S RNA into the large ribosomal subunit, where it forms part of the central protuberance. In the 70S ribosome it contacts protein S13 of the 30S subunit (bridge B1b), connecting the 2 subunits; this bridge is implicated in subunit movement. Contacts the P site tRNA; the 5S rRNA and some of its associated proteins might help stabilize positioning of ribosome-bound tRNAs. The polypeptide is Large ribosomal subunit protein uL5 (Stenotrophomonas maltophilia (strain R551-3)).